A 221-amino-acid polypeptide reads, in one-letter code: UPF0502 protein CPS_0106 (221 aa).

It belongs to the UPF0502 family.

This chain is UPF0502 protein CPS_0106, found in Colwellia psychrerythraea (strain 34H / ATCC BAA-681) (Vibrio psychroerythus).